The chain runs to 132 residues: Methylglyoxal synthase (132 aa).

Residues 1-132 form the MGS-like domain; it reads MNIALIAHDQ…LLEWREIEDK (132 aa). Positions 8 and 12 each coordinate substrate. Aspartate 60 (proton donor/acceptor) is an active-site residue. Histidine 87 contacts substrate.

The protein belongs to the methylglyoxal synthase family.

It carries out the reaction dihydroxyacetone phosphate = methylglyoxal + phosphate. Functionally, catalyzes the formation of methylglyoxal from dihydroxyacetone phosphate. This is Methylglyoxal synthase from Thermoanaerobacter pseudethanolicus (strain ATCC 33223 / 39E) (Clostridium thermohydrosulfuricum).